A 634-amino-acid chain; its full sequence is Mediator of RNA polymerase II transcription subunit 17 (634 aa).

Disordered regions lie at residues 51-73 (DKHK…DVDT) and 606-626 (DEKA…GSPG). Residues 611-623 (RAQSWKPDSTTPG) are compositionally biased toward polar residues.

Belongs to the Mediator complex subunit 17 family. Component of the Mediator complex.

The protein resides in the nucleus. Component of the Mediator complex, a coactivator involved in the regulated transcription of nearly all RNA polymerase II-dependent genes. Mediator functions as a bridge to convey information from gene-specific regulatory proteins to the basal RNA polymerase II transcription machinery. Mediator is recruited to promoters by direct interactions with regulatory proteins and serves as a scaffold for the assembly of a functional preinitiation complex with RNA polymerase II and the general transcription factors. In Aspergillus terreus (strain NIH 2624 / FGSC A1156), this protein is Mediator of RNA polymerase II transcription subunit 17 (srb4).